Consider the following 144-residue polypeptide: MGLKLSGRYIFLVLAVHLAYLLQAVKAAGKCDAVFKGLSDCMLTLGDKVANYPQDLEEKKNLDTICSYWDDFHVCTVTALADCQEGASDIWEKLKRQSKNLNIQGSLFELCPGSTGAPGPRLLFPAFLPLLIVFLSALLNWVLQ.

Positions 1–27 are cleaved as a signal peptide; that stretch reads MGLKLSGRYIFLVLAVHLAYLLQAVKA. The GPI-anchor amidated serine moiety is linked to residue S114. Residues 115–144 constitute a propeptide, removed in mature form; it reads TGAPGPRLLFPAFLPLLIVFLSALLNWVLQ.

This sequence belongs to the neuritin family.

The protein resides in the cell membrane. In terms of biological role, modulates postsynaptic dendritic arbor elaboration and synaptic maturation. The sequence is that of Neuritin-B (nrn1-b) from Xenopus laevis (African clawed frog).